The sequence spans 614 residues: Kelch-like protein 40 (614 aa).

Residues 33 to 100 (IDCVLKIQGK…IYTSEIEITE (68 aa)) enclose the BTB domain. The BACK domain maps to 135–237 (CLAIFRLGLL…PQDYIKNKVE (103 aa)). Kelch repeat units follow at residues 353 to 405 (QLFV…ESEN), 406 to 455 (SIYL…SHDN), 456 to 503 (LVYV…VHKG), 504 to 550 (KIFI…SMNG), and 552 to 606 (LYAI…AARL).

Belongs to the KLHL40 family. Component of the BCR(KLHL40) E3 ubiquitin ligase complex.

Its subcellular location is the cytoplasm. It localises to the myofibril. The protein resides in the sarcomere. It is found in the a band. The protein localises to the i band. Substrate-specific adapter of a BCR (BTB-CUL3-RBX1) E3 ubiquitin ligase complex that acts as a key regulator of skeletal muscle development. In Xenopus laevis (African clawed frog), this protein is Kelch-like protein 40 (klhl40).